A 185-amino-acid polypeptide reads, in one-letter code: Elongation factor P (185 aa).

It belongs to the elongation factor P family.

Its subcellular location is the cytoplasm. It functions in the pathway protein biosynthesis; polypeptide chain elongation. Functionally, involved in peptide bond synthesis. Stimulates efficient translation and peptide-bond synthesis on native or reconstituted 70S ribosomes in vitro. Probably functions indirectly by altering the affinity of the ribosome for aminoacyl-tRNA, thus increasing their reactivity as acceptors for peptidyl transferase. In Desulfitobacterium hafniense (strain Y51), this protein is Elongation factor P.